Consider the following 253-residue polypeptide: GALGDRNGDCACDRPSPRGYWGGGMTGRSAFADPHIAEGRLANQDARLGTLEEEVDKLQHKYDDFIAGKTARRERFAQLKDRVWGLEAHHCDDDHLSCKDVAFTCIGHNLVCDGHKDCLNGHDEDEETCSIAASVGSSFEGQIRQLDTCTKRKPSAFRFIITNVDVPKYFPQEPHVKATILMTSSKDGHETQSSLAVDGVYDFTHRKVILYSPDKDNLIFECTFPRHDNNHCKGVMKHSGGDVCLTFTLERID.

One can recognise an LDL-receptor class A domain in the interval 89–131 (HHCDDDHLSCKDVAFTCIGHNLVCDGHKDCLNGHDEDEETCSI). Disulfide bonds link Cys-91-Cys-105, Cys-98-Cys-118, and Cys-112-Cys-129.

As to quaternary structure, disulfide-linked dimer of identical chains. A model is proposed for the subunit structure of the Tylorrhynchus hemoglobin, consisting of 216 polypeptide chains, 192 heme-containing chains, and 24 linker chains.

Its function is as follows. Acts as a linker for the assembly of heme-containing chains in the construction of giant hemoglobin. This chain is Giant extracellular hemoglobin linker 1 chain, found in Tylorrhynchus heterochetus (Japanese palolo worm).